Here is a 47-residue protein sequence, read N- to C-terminus: PhoP/PhoQ regulator MgrB (47 aa).

The helical transmembrane segment at 6–26 (WVALVVVVLACLLLWAQVFNM) threads the bilayer.

Belongs to the MgrB family. In terms of assembly, may form homooligomers. Probably interacts with the periplasmic domain of PhoQ.

Its subcellular location is the cell inner membrane. Functionally, phoP-regulated transcription is redox-sensitive, being activated when the periplasm becomes more reducing. MgrB acts between DsbA/DsbB and PhoP/PhoQ in this pathway. Represses PhoP/PhoQ signaling, possibly by binding to the periplasmic domain of PhoQ, altering its activity and that of downstream effector PhoP. The sequence is that of PhoP/PhoQ regulator MgrB from Escherichia coli O127:H6 (strain E2348/69 / EPEC).